The primary structure comprises 276 residues: Cholesterol 25-hydroxylase-like protein 1, member 2 (276 aa).

A glycan (N-linked (GlcNAc...) asparagine) is linked at Asn30. 3 helical membrane passes run 39–59 (LFPV…YLSC), 90–110 (GVTL…QWMW), and 126–146 (LVGG…IWHF). Positions 134–265 (LLLFDLQYFI…FSHWDKMFGT (132 aa)) constitute a Fatty acid hydroxylase domain. The short motif at 144–148 (WHFLH) is the Histidine box-1 element. Residues 159-163 (HAIHH) carry the Histidine box-2 motif. N-linked (GlcNAc...) asparagine glycosylation is present at Asn164. The next 2 helical transmembrane spans lie at 175–195 (CLGG…PVLL) and 199–219 (LLTT…DHCG). Positions 240–246 (KHDVHHQ) match the Histidine box-3 motif.

It belongs to the sterol desaturase family. It depends on Fe cation as a cofactor.

It is found in the endoplasmic reticulum membrane. Functionally, may catalyze the formation of 25-hydroxycholesterol from cholesterol. The sequence is that of Cholesterol 25-hydroxylase-like protein 1, member 2 from Danio rerio (Zebrafish).